The sequence spans 477 residues: Ribulose bisphosphate carboxylase large chain (477 aa).

Residues 1–2 (MS) constitute a propeptide that is removed on maturation. Position 3 is an N-acetylproline (P3). Position 14 is an N6,N6,N6-trimethyllysine (K14). Residues N123 and T173 each coordinate substrate. The active-site Proton acceptor is K175. Position 177 (K177) interacts with substrate. 3 residues coordinate Mg(2+): K201, D203, and E204. K201 carries the post-translational modification N6-carboxylysine. The Proton acceptor role is filled by H294. Substrate is bound by residues R295, H327, and S379.

The protein belongs to the RuBisCO large chain family. Type I subfamily. Heterohexadecamer of 8 large chains and 8 small chains; disulfide-linked. The disulfide link is formed within the large subunit homodimers. It depends on Mg(2+) as a cofactor. In terms of processing, the disulfide bond which can form in the large chain dimeric partners within the hexadecamer appears to be associated with oxidative stress and protein turnover.

The protein localises to the plastid. Its subcellular location is the chloroplast. It catalyses the reaction 2 (2R)-3-phosphoglycerate + 2 H(+) = D-ribulose 1,5-bisphosphate + CO2 + H2O. It carries out the reaction D-ribulose 1,5-bisphosphate + O2 = 2-phosphoglycolate + (2R)-3-phosphoglycerate + 2 H(+). Its function is as follows. RuBisCO catalyzes two reactions: the carboxylation of D-ribulose 1,5-bisphosphate, the primary event in carbon dioxide fixation, as well as the oxidative fragmentation of the pentose substrate in the photorespiration process. Both reactions occur simultaneously and in competition at the same active site. In Cichorium intybus (Chicory), this protein is Ribulose bisphosphate carboxylase large chain.